The following is an 83-amino-acid chain: Mitochondrial import inner membrane translocase subunit Tim8 (83 aa).

The Twin CX3C motif motif lies at 35 to 60 (CWDVCFADYRPPSKMDGKTQTCIQNC). 2 cysteine pairs are disulfide-bonded: Cys-35–Cys-60 and Cys-39–Cys-56.

It belongs to the small Tim family. In terms of assembly, heterohexamer; composed of 3 copies of ddp-1/tim-8 and 3 copies of tin-13/tim-13, named soluble 70 kDa complex. Associates with the TIM22 complex, whose core is composed of tim-22.

It localises to the mitochondrion inner membrane. In terms of biological role, mitochondrial intermembrane chaperone that participates in the import and insertion of some multi-pass transmembrane proteins into the mitochondrial inner membrane. Also required for the transfer of beta-barrel precursors from the TOM complex to the sorting and assembly machinery (SAM complex) of the outer membrane. Acts as a chaperone-like protein that protects the hydrophobic precursors from aggregation and guide them through the mitochondrial intermembrane space. The ddp-1/tim-8-tim-13 complex mediates the import of some proteins while the predominant tim-9/tin-9.1-tim-10/tin-10 70 kDa complex mediates the import of much more proteins. This Caenorhabditis elegans protein is Mitochondrial import inner membrane translocase subunit Tim8.